Reading from the N-terminus, the 229-residue chain is Uracil-DNA glycosylase (229 aa).

The active-site Proton acceptor is the aspartate 64.

This sequence belongs to the uracil-DNA glycosylase (UDG) superfamily. UNG family.

The protein resides in the cytoplasm. The enzyme catalyses Hydrolyzes single-stranded DNA or mismatched double-stranded DNA and polynucleotides, releasing free uracil.. Its function is as follows. Excises uracil residues from the DNA which can arise as a result of misincorporation of dUMP residues by DNA polymerase or due to deamination of cytosine. The sequence is that of Uracil-DNA glycosylase from Salmonella arizonae (strain ATCC BAA-731 / CDC346-86 / RSK2980).